A 500-amino-acid chain; its full sequence is Probable cytosol aminopeptidase (500 aa).

Mn(2+) is bound by residues lysine 265 and aspartate 270. The active site involves lysine 277. The Mn(2+) site is built by aspartate 288, aspartate 347, and glutamate 349. The active site involves arginine 351.

This sequence belongs to the peptidase M17 family. Mn(2+) is required as a cofactor.

It is found in the cytoplasm. It carries out the reaction Release of an N-terminal amino acid, Xaa-|-Yaa-, in which Xaa is preferably Leu, but may be other amino acids including Pro although not Arg or Lys, and Yaa may be Pro. Amino acid amides and methyl esters are also readily hydrolyzed, but rates on arylamides are exceedingly low.. The enzyme catalyses Release of an N-terminal amino acid, preferentially leucine, but not glutamic or aspartic acids.. Functionally, presumably involved in the processing and regular turnover of intracellular proteins. Catalyzes the removal of unsubstituted N-terminal amino acids from various peptides. This chain is Probable cytosol aminopeptidase, found in Corynebacterium diphtheriae (strain ATCC 700971 / NCTC 13129 / Biotype gravis).